Consider the following 365-residue polypeptide: Peptide chain release factor 2 (365 aa).

At Gln-252 the chain carries N5-methylglutamine.

The protein belongs to the prokaryotic/mitochondrial release factor family. Post-translationally, methylated by PrmC. Methylation increases the termination efficiency of RF2.

It is found in the cytoplasm. In terms of biological role, peptide chain release factor 2 directs the termination of translation in response to the peptide chain termination codons UGA and UAA. The chain is Peptide chain release factor 2 from Escherichia coli O9:H4 (strain HS).